Here is a 360-residue protein sequence, read N- to C-terminus: Putative transcription factor A494R (360 aa).

The segment at 153 to 175 is a zinc-finger region; sequence CTCGGQMELWVNSTQSDLVCNEC.

It belongs to the nucleo-cytoplasmic large DNA viruses (NCLDVs) VLTF-3 family.

Functionally, putative transcription factor. This Paramecium bursaria Chlorella virus 1 (PBCV-1) protein is Putative transcription factor A494R.